The following is a 202-amino-acid chain: N-(5'-phosphoribosyl)anthranilate isomerase (202 aa).

It belongs to the TrpF family.

The enzyme catalyses N-(5-phospho-beta-D-ribosyl)anthranilate = 1-(2-carboxyphenylamino)-1-deoxy-D-ribulose 5-phosphate. The protein operates within amino-acid biosynthesis; L-tryptophan biosynthesis; L-tryptophan from chorismate: step 3/5. The chain is N-(5'-phosphoribosyl)anthranilate isomerase from Listeria monocytogenes serotype 4a (strain HCC23).